The chain runs to 123 residues: Gamma-synuclein (123 aa).

2 tandem repeats follow at residues 20–30 and 31–41. Residues 20-67 form a 4 X 11 AA tandem repeats of [EGSA]-K-T-K-[EQ]-[GQ]-V-X(4) region; the sequence is EKTKQGVTEAAEKTKEGVMYVGTKTKGERGTSVTSVAEKTKEQANAVS. Residues 42–56 form a 3; approximate repeat; the sequence is TKTKGERGTSVTSVA. The stretch at 57–67 is repeat 4; it reads EKTKEQANAVS. A phosphoserine mark is found at Ser67 and Ser72. The interval 93 to 123 is disordered; that stretch reads GVVRKEDLEPPAQDQEAKEQEEGEEAKSGGD. Positions 107–123 are enriched in basic and acidic residues; it reads QEAKEQEEGEEAKSGGD. The residue at position 120 (Ser120) is a Phosphoserine; by BARK1, CaMK2 and CK2.

The protein belongs to the synuclein family. As to quaternary structure, may be a centrosome-associated protein. Interacts with MYOC; affects its secretion and its aggregation. Post-translationally, phosphorylated. Phosphorylation by GRK5 appears to occur on residues distinct from the residue phosphorylated by other kinases. In terms of tissue distribution, specifically expressed in the peripheral nervous system. High expression in motoneurons of the brainstem. Also found in neurons of many other brain regions including the cerebellar cortex, thalamus, hypothalamus and CA1, CA2, CA3 and CA4 regions of the hippocampus.

Its subcellular location is the cytoplasm. The protein localises to the perinuclear region. The protein resides in the cytoskeleton. It localises to the microtubule organizing center. It is found in the centrosome. Its subcellular location is the spindle. In terms of biological role, plays a role in neurofilament network integrity. May be involved in modulating axonal architecture during development and in the adult. In vitro, increases the susceptibility of neurofilament-H to calcium-dependent proteases. May also function in modulating the keratin network in skin. Activates the MAPK and Elk-1 signal transduction pathway. The sequence is that of Gamma-synuclein (Sncg) from Rattus norvegicus (Rat).